Reading from the N-terminus, the 344-residue chain is Alkyl hydroperoxide reductase Rv2159c (344 aa).

The important for interaction with PknI stretch occupies residues 49–50 (AG). C84 (cysteine sulfenic acid (-SOH) intermediate) is an active-site residue.

Belongs to the AhpD family. As to quaternary structure, interacts with the serine/threonine-protein kinase PknI. The PknI-Rv2159c interaction is mediated through phosphorylation independent physical interaction.

Its activity is regulated as follows. Interaction with PknI increases the peroxidase activity by several folds. Involved in protection against oxidative stresses. May play a significant role in maintaining the cellular homeostasis during stress and virulence of M.tuberculosis. In vitro, catalyzes the decomposition of cumene hydroperoxide (CHP) to acetophenone. This chain is Alkyl hydroperoxide reductase Rv2159c, found in Mycobacterium tuberculosis (strain ATCC 25618 / H37Rv).